Here is a 112-residue protein sequence, read N- to C-terminus: Iron-sulfur cluster insertion protein ErpA (112 aa).

Residues Cys40, Cys104, and Cys106 each contribute to the iron-sulfur cluster site.

The protein belongs to the HesB/IscA family. In terms of assembly, homodimer. Iron-sulfur cluster is required as a cofactor.

Functionally, required for insertion of 4Fe-4S clusters for at least IspG. The protein is Iron-sulfur cluster insertion protein ErpA of Pseudoalteromonas translucida (strain TAC 125).